Here is a 1698-residue protein sequence, read N- to C-terminus: MPAEIKPSAPAEPETPTKSKPKSSSSSHGKPALARVTLLDGSLLDVSIDRKAIGRDVINSICAGLNLIEKDYFGLTYETPTDPRTWLDLEKPVSKFFRTDTWPLTFAVKFYPPEPSQLKEDITRYHLCLQVRNDILEGRLPCTFVTHALLGSYLVQSEMGDYDAEEMPTRAYLKDFKIAPNQTAELEDKVMDLHKTHKGQSPAEAELHYLENAKKLAMYGVDLHPAKDSEGVDIMLGVCASGLLVYRDKLRINRFAWPKILKISYKRHHFYIKIRPGEFEQYESTIGFKLANHRAAKKLWKSCVEHHTFFRLMTPEPVSKSKMFPVFGSTYRYKGRTQAESTNTPVDRTPPKFNRTLSGARLTSRSMDALALAEKEKVARKSSTLDHRGDRNADGDAHSRSPIKNKKEKDADKEAKLREKKQKEKEEKERKEREKRELEEKKKAEKAAKAALAAGAAAGAAVNGNDELNDSNKSDKSSGRRGVGIFSSGRKSKSGSPSKDGKDKSGKDKDKEVGRLGLVVTSGLGDNQQDQNLDEAARNAAKNRGSTTPGVTRQYEYAVDNDGNTSPTRKSYTPGGFRYDQDPNSRKSGADGQEQLSPTSQQKKIGLAFNYAPGNENALKETAEKLKAGQLSPRTQDKLNRGQLSPKSRAKLLQDPLLSPTTRAKLQGSAVDAAAVPLSDSQKRSYSPTKGPQGYSSGAPGSYKPISDPTADFLESQRYNKEPGYVGPSKADVAAGLAGAAGSKKPGSPTKTGKGAPGAAAAAAAGAAGAAAAAAKPKKRRVKIMVITSKFDPSTKRIDAENGSIEHSTGILDPATGLIDTKYGVIDPKKGTLEALNTKTGKKEVFQGDVDGKTGNLHLVSGVADPKTGRLDDTLGQIVCITPQDNPVVELTVITSRIDPATGKIDTVNGDVERSLGVLNLDTGLLDTKYGEINTRTGELKAIDPKSGKIVVSKNVKVDPGTGQITILGIVDPKTNKIDPNQGRLIEVGQQIDPIVEVTSLAGKFDSKRNIIDPKTAQVETSGGQFDPKAGKIDTKYGQIDLVKHTITFNDPKSGKTVTRDIKIEPTTGQIVLKNQVNPKNNKPDKDYARIISLRIVQQRVDPATKAPITEVSASKDKDIVVDPKSNQIWVPTGATDPATKEQQYISSSVDPKTGYVITIYGYLDPKTNEIKKQTKLDPNTIKIEPTSGKIYTATGEVDQATGEPLYAATQVDPESGEVYTKLARVDPKTGKIVIVRILLISKTDERGRPEEIDPSTCEIDPVSGRVLKFFNKTVYVYNMIDPVTGEIVQVDPNDPRFAGARTTVTHTMTLTGEIDPVTGRIKSEYGDIDPNTGDIDPATAVTDPVTGKLILNYAQIDPSHFGKQAQVQTTTETVPITRQQFFDGVKHISKGALRRDSEGSSDDDMTAQYGADQVNEILIGSPAGQAGGKLGKPVSTPTVVKTTTKQVLTKNIDGVTHNVEEEVRNLGTGEVTYSTQEHKADATPTDLSGAYVTATAVTTRTATTHEDLGKNAKTEQLEEKTVATTRTHDPNKQQQRVVTQEVKTTATVTSGDQYQRRDSVSSTSSGDSGTPIDGPYDGASVVRTDNQKSPLFTTSATTGPHVESTRVVLGEDTPGFSGHGEIISTQTVSSKTRTVETITYKTERDGIVETRVEQKITIQSDGDPIDHDKALAEAIQEATAMNPDMTVEKIEIQQQTQ.

The interval 1–31 (MPAEIKPSAPAEPETPTKSKPKSSSSSHGKP) is disordered. Positions 12–27 (EPETPTKSKPKSSSSS) are enriched in low complexity. In terms of domain architecture, FERM spans 32 to 314 (ALARVTLLDG…EHHTFFRLMT (283 aa)). The interval 317-434 (PVSKSKMFPV…KEEKERKERE (118 aa)) is hydrophilic. Disordered regions lie at residues 335-361 (GRTQAESTNTPVDRTPPKFNRTLSGAR) and 374-710 (EKEK…SDPT). The segment covering 374 to 448 (EKEKVARKSS…EEKKKAEKAA (75 aa)) has biased composition (basic and acidic residues). Residues 449–461 (KAALAAGAAAGAA) are compositionally biased toward low complexity. Residues Ser471, Ser474, and Ser478 each carry the phosphoserine modification. Basic and acidic residues predominate over residues 499 to 514 (KDGKDKSGKDKDKEVG). Over residues 562–571 (DGNTSPTRKS) the composition is skewed to polar residues. Phosphoserine is present on Ser566. Positions 579–589 (YDQDPNSRKSG) are enriched in basic and acidic residues. Residues 594 to 603 (EQLSPTSQQK) are compositionally biased toward polar residues. A compositionally biased stretch (basic and acidic residues) spans 618 to 627 (ALKETAEKLK). Ser659 and Ser687 each carry phosphoserine. The segment covering 684-696 (RSYSPTKGPQGYS) has biased composition (polar residues). The residue at position 689 (Thr689) is a Phosphothreonine. Residues Ser697, Ser1398, Ser1401, and Ser1402 each carry the phosphoserine modification. Residues 1286–1698 (GEIVQVDPND…EKIEIQQQTQ (413 aa)) form a C-terminal (CTD) region. Residue Thr1407 is modified to Phosphothreonine. Basic and acidic residues predominate over residues 1509 to 1532 (LGKNAKTEQLEEKTVATTRTHDPN). The tract at residues 1509-1599 (LGKNAKTEQL…SPLFTTSATT (91 aa)) is disordered. Residues 1533-1554 (KQQQRVVTQEVKTTATVTSGDQ) are compositionally biased toward polar residues. Over residues 1561 to 1571 (VSSTSSGDSGT) the composition is skewed to low complexity. A compositionally biased stretch (polar residues) spans 1584–1599 (RTDNQKSPLFTTSATT). Ser1590 is modified (phosphoserine).

As to expression, at onset of germ band retraction, expression is seen in epidermis, hindgut and foregut. During retraction, expression extends to tracheal branches and salivary glands.

It is found in the cell junction. The protein resides in the septate junction. In terms of biological role, an integral component of the septate junction. May play a role in cell-cell interactions that are necessary for proper development. Vital for embryonic development. This is Protein 4.1 homolog (cora) from Drosophila melanogaster (Fruit fly).